An 83-amino-acid polypeptide reads, in one-letter code: Mu-theraphotoxin-Hhn2o (83 aa).

A signal peptide spans 1-21 (MKASMFLALAGLVLLFVVGYA). Positions 22 to 48 (SESEEKEFPIELLSKIFAVDVFKGEER) are excised as a propeptide. 3 disulfides stabilise this stretch: cysteine 50-cysteine 65, cysteine 57-cysteine 70, and cysteine 64-cysteine 77. Leucine 81 bears the Leucine amide mark.

It belongs to the neurotoxin 10 (Hwtx-1) family. 15 (Hntx-3) subfamily. In terms of assembly, monomer. Expressed by the venom gland.

The protein localises to the secreted. Functionally, lethal neurotoxin. Selectively blocks tetrodotoxin-sensitive voltage-gated sodium channels (Nav). Does not affect tetrodotoxin-resistant voltage-gated sodium channels or calcium channels. In Cyriopagopus hainanus (Chinese bird spider), this protein is Mu-theraphotoxin-Hhn2o.